The chain runs to 298 residues: 5'-AMP-activated protein kinase subunit beta (298 aa).

The tract at residues 1-98 is disordered; sequence MGNVQSQEGE…KTHQPYSGPC (98 aa). Residues 19 to 30 are compositionally biased toward polar residues; sequence QDATTTPDNANN. Positions 48 to 59 are enriched in acidic residues; the sequence is LNQEGEMSDDNQ. Positions 60 to 77 are enriched in polar residues; sequence QEGGNNRTSQNGTSGSSG. A compositionally biased stretch (basic residues) spans 78–91; it reads HTKRRSQTSGKKTH. Residue 250–252 participates in ADP binding; it reads DQS.

The protein belongs to the 5'-AMP-activated protein kinase beta subunit family. AMPK is a heterotrimer of an alpha catalytic subunit (ssp2), a beta (amk2) and a gamma non-catalytic subunits (cbs2). The beta subunit serves as a bridge between the catalytic and the regulatory subunit.

It is found in the cytoplasm. Functionally, beta subunit of AMP-activated protein kinase (AMPK), which is required for transcriptional, metabolic, and developmental adaptations in response to glucose limitation. Has a structural role, mediating heterotrimer formation, and a regulatory role, defining carbon source-regulated subcellular location and substrate specificity of the AMPK kinase complex. This Schizosaccharomyces pombe (strain 972 / ATCC 24843) (Fission yeast) protein is 5'-AMP-activated protein kinase subunit beta (amk2).